Reading from the N-terminus, the 1450-residue chain is Collagen alpha-1(I) chain (1450 aa).

The first 22 residues, M1–A22, serve as a signal peptide directing secretion. Positions L23 to P148 are cleaved as a propeptide — N-terminal propeptide. The VWFC domain occupies G31–P90. The segment at Y97–Y1201 is disordered. Over residues P106–R116 the composition is skewed to basic and acidic residues. Over residues L130–P140 the composition is skewed to pro residues. Pyrrolidone carboxylic acid is present on Q149. Residue K157 is modified to Allysine. Residues P166 to S181 are compositionally biased toward pro residues. 8 positions are modified to 4-hydroxyproline: P176, P182, P194, P197, P212, P227, P242, and P248. A compositionally biased stretch (low complexity) spans P182–R206. The span at N215 to E229 shows a compositional bias: basic and acidic residues. A 5-hydroxylysine; alternate modification is found at K251. K251 is a glycosylation site (O-linked (Gal...) hydroxylysine; alternate). Positions N266–L292 are enriched in low complexity. A 4-hydroxyproline mark is found at P275, P278, P284, P293, P299, P314, P320, P329, P332, P359, P362, P374, P380, P389, P395, P398, and P413. Pro residues predominate over residues A317–F331. Residues P352–P374 show a composition bias toward low complexity. The segment covering G378–G387 has biased composition (gly residues). The span at S388–Q443 shows a compositional bias: low complexity. Position 416 is a 5-hydroxylysine (K416). P422, P437, P446, P461, P467, P476, and P482 each carry 4-hydroxyproline. Positions G471–G480 are enriched in gly residues. At K491 the chain carries 5-hydroxylysine. 16 positions are modified to 4-hydroxyproline: P494, P515, P521, P530, P533, P551, P569, P578, P590, P608, P626, P632, P644, P650, P656, and P668. Low complexity-rich tracts occupy residues F568 to P578 and V586 to P596. The segment covering P637–P650 has biased composition (low complexity). The span at G669–G678 shows a compositional bias: gly residues. Low complexity predominate over residues A679–A701. 4-hydroxyproline occurs at positions 689, 704, 710, 716, and 725. A compositionally biased stretch (gly residues) spans G702–G711. K737 carries the post-translational modification 5-hydroxylysine. P743, P758, P764, P785, P791, P794, P803, P809, P827, P836, and P845 each carry 4-hydroxyproline. The span at P796–D806 shows a compositional bias: low complexity. The span at D817–L869 shows a compositional bias: low complexity. Position 848 is a 5-hydroxylysine (K848). 4-hydroxyproline is present on residues P857 and P863. P871 is subject to 3-hydroxyproline. 4-hydroxyproline is present on residues P872, P881, P884, P908, P914, P923, P932, P950, P962, P968, P983, P989, P995, P1004, and P1010. The segment covering S917 to Q943 has biased composition (low complexity). Residues P982–E997 show a composition bias toward pro residues. K1019 is modified (5-hydroxylysine). Positions S1028 to V1043 are enriched in pro residues. A 4-hydroxyproline mark is found at P1031, P1034, and P1037. The segment covering A1064 to A1078 has biased composition (low complexity). The span at R1079–M1093 shows a compositional bias: basic and acidic residues. The residue at position 1082 (K1082) is a 5-hydroxylysine. Position 1094 is a 5-hydroxylysine; alternate (K1094). O-linked (Gal...) hydroxylysine; alternate glycosylation occurs at K1094. 4-hydroxyproline occurs at positions 1106 and 1109. Pro residues predominate over residues P1120–P1129. 2 positions are modified to 4-hydroxyproline: P1130 and P1145. The segment covering P1130–P1145 has biased composition (low complexity). P1150 bears the 3-hydroxyproline mark. 4-hydroxyproline is present on P1151. Over residues A1163–P1178 the composition is skewed to pro residues. P1165 carries the post-translational modification 3-hydroxyproline. Position 1166 is a 4-hydroxyproline (P1166). 3-hydroxyproline is present on P1168. Position 1169 is a 4-hydroxyproline (P1169). P1171 carries the 3-hydroxyproline modification. 3 positions are modified to 4-hydroxyproline: P1172, P1175, and P1178. K1194 bears the Allysine mark. The propeptide at D1205–L1450 is C-terminal propeptide. The 236-residue stretch at L1215–L1450 folds into the Fibrillar collagen NC1 domain. Disulfide bonds link C1245/C1277, C1285/C1448, and C1356/C1401. Residues D1263, N1265, Q1266, C1268, and D1271 each contribute to the Ca(2+) site. N1351 is a glycosylation site (N-linked (GlcNAc...) asparagine).

The protein belongs to the fibrillar collagen family. As to quaternary structure, trimers of one alpha 2(I) and two alpha 1(I) chains. Contains mostly 4-hydroxyproline. Proline residues at the third position of the tripeptide repeating unit (G-X-Y) are hydroxylated in some or all of the chains. Post-translationally, contains 3-hydroxyproline at a few sites. This modification occurs on the first proline residue in the sequence motif Gly-Pro-Hyp, where Hyp is 4-hydroxyproline. In terms of processing, lysine residues at the third position of the tripeptide repeating unit (G-X-Y) are 5-hydroxylated in some or all of the chains. O-glycosylated on hydroxylated lysine residues. The O-linked glycan consists of a Glc-Gal disaccharide.

The protein resides in the secreted. It is found in the extracellular space. It localises to the extracellular matrix. Its function is as follows. Type I collagen is a member of group I collagen (fibrillar forming collagen). This chain is Collagen alpha-1(I) chain (COL1A1), found in Cynops pyrrhogaster (Japanese fire-bellied newt).